Here is a 516-residue protein sequence, read N- to C-terminus: GTPase Obg (516 aa).

One can recognise an Obg domain in the interval 4–161 (PTFVDRVTLH…LEIVLELKVV (158 aa)). An OBG-type G domain is found at 162-332 (ADIGLVGFPS…LTFAMAGIVE (171 aa)). Residues 168-175 (GFPSAGKS), 193-197 (FTTLV), 214-217 (DVPG), 284-287 (NKVD), and 313-315 (SAA) each bind GTP. Positions 175 and 195 each coordinate Mg(2+). In terms of domain architecture, OCT spans 351–432 (PSVDGSDAFT…ENAVVFDFKP (82 aa)). The segment covering 466–491 (AMADRAEGETRADVARRLDRPAREDG) has biased composition (basic and acidic residues). The segment at 466–516 (AMADRAEGETRADVARRLDRPAREDGGAYGPQSYEIGGRDDPDWAEEDLGE) is disordered.

It belongs to the TRAFAC class OBG-HflX-like GTPase superfamily. OBG GTPase family. As to quaternary structure, monomer. Mg(2+) serves as cofactor.

Its subcellular location is the cytoplasm. An essential GTPase which binds GTP, GDP and possibly (p)ppGpp with moderate affinity, with high nucleotide exchange rates and a fairly low GTP hydrolysis rate. Plays a role in control of the cell cycle, stress response, ribosome biogenesis and in those bacteria that undergo differentiation, in morphogenesis control. This Nocardioides sp. (strain ATCC BAA-499 / JS614) protein is GTPase Obg.